We begin with the raw amino-acid sequence, 644 residues long: MMDGFAQDWPTLTHTDNGLAMDQLSGVVGGGDLPGDVGFEPQTRARSNTWPCPRPENFVEPPDELDSTKASNQQLAAGDSQQAIQNANAAKKNSSRRNAWGNLSYADLITHAIGSATDKRLTLSQIYEWMVQNVPYFKDKGDSNSSAGWKNSIRHNLSLHNRFMRVQNEGTGKSSWWMLNPEAKPGKSVRRRAASMETSRYEKRRGRAKKRVEALRQAGVVGLNDATPSPSSSVSEGLDHFPESPLHSGGGFQLSPDFRQRASSNASSCGRLSPIRAQDLEPQDLWGFPVDYQNTTMTQAHAQALEELTGSMADELTLCNQQQQQQQQQQQQQQQQQQQQGFSAASGLPSQPPPPPYQPPQLQQQQQQQPSYSLNGPAPGGYQTLQPQSQSQCLLHRSLNCSCLHNARDGLSPNSVTTTMSPAYPNSEPSSDSLNTYSNVVLDGSSDLLVQQQQQQQLQQQQVKVEFEGQCLEVLNNEAQPIDEFNLENFPVGNLECNVEELLQQEMSYDGLLDINIPLANVSTNAPLVNLVNNSTTLSSSSSNLSGSTTTLSSSSLSAAVQLNQLQAQLQQQQQQQQQHLQQQQQHHQHQQQLLLNNNNNNNNNNSSNSSLDLATQTAATNLNAARVQYSQPSVVTSPPSWVH.

The tract at residues phenylalanine 39 to leucine 75 is disordered. A Phosphothreonine; by PKB/AKT1 modification is found at threonine 49. Position 80 is a phosphoserine (serine 80). Positions tryptophan 100–glycine 206 form a DNA-binding region, fork-head. Disordered regions lie at residues lysine 187–lysine 210, glycine 222–arginine 276, glutamine 329–glutamine 386, serine 412–asparagine 435, and glutamine 578–leucine 612. Position 195 is a phosphoserine; by PKB/AKT1 (serine 195). 2 stretches are compositionally biased toward polar residues: residues alanine 226 to serine 235 and arginine 261 to glycine 270. Serine 264 is subject to Phosphoserine; by PKB/AKT1. Phosphoserine is present on residues serine 267, serine 268, and serine 273. The span at glutamine 329 to glutamine 340 shows a compositional bias: low complexity. Pro residues predominate over residues serine 350 to proline 359. Low complexity predominate over residues proline 360–leucine 374. Polar residues predominate over residues serine 412–serine 421.

As to quaternary structure, interacts with melt.

The protein resides in the cytoplasm. It is found in the nucleus. Its function is as follows. Transcription factor involved in the regulation of the insulin signaling pathway. Consistently activates both the downstream target Thor\d4EBP and the feedback control target InR. Involved in negative regulation of the cell cycle, modulating cell growth and proliferation. In response to cellular stresses, such as nutrient deprivation or increased levels of reactive oxygen species, foxo is activated and inhibits growth through the action of target genes such as Thor. Foxo activated in the adult fat body can regulate lifespan in adults; an insulin peptide itself may function as one secondary messenger of insulin-regulated aging. Also regulates Lip4, homolog of human acid lipases, thereby acting as a key modulator of lipid metabolism by insulin signaling and integrates insulin responses to glucose and lipid homeostasis. The sequence is that of Forkhead box protein O from Drosophila pseudoobscura pseudoobscura (Fruit fly).